The chain runs to 591 residues: Aspartate--tRNA(Asp/Asn) ligase (591 aa).

An L-aspartate-binding site is contributed by glutamate 174. Residues glutamine 198–lysine 201 are aspartate. Arginine 220 contacts L-aspartate. ATP is bound by residues arginine 220 to glutamate 222 and glutamine 229. An L-aspartate-binding site is contributed by histidine 450. Glutamate 483 lines the ATP pocket. Arginine 490 provides a ligand contact to L-aspartate. Position 535 to 538 (glycine 535 to arginine 538) interacts with ATP.

The protein belongs to the class-II aminoacyl-tRNA synthetase family. Type 1 subfamily. In terms of assembly, homodimer.

The protein localises to the cytoplasm. It carries out the reaction tRNA(Asx) + L-aspartate + ATP = L-aspartyl-tRNA(Asx) + AMP + diphosphate. Aspartyl-tRNA synthetase with relaxed tRNA specificity since it is able to aspartylate not only its cognate tRNA(Asp) but also tRNA(Asn). Reaction proceeds in two steps: L-aspartate is first activated by ATP to form Asp-AMP and then transferred to the acceptor end of tRNA(Asp/Asn). The chain is Aspartate--tRNA(Asp/Asn) ligase from Pseudomonas fluorescens (strain SBW25).